Here is a 333-residue protein sequence, read N- to C-terminus: Polygalacturonase inhibitor (333 aa).

Positions Met-1 to Ser-27 are cleaved as a signal peptide. 2 disulfides stabilise this stretch: Cys-30-Cys-60 and Cys-61-Cys-68. LRR repeat units follow at residues Thr-72–Leu-96, Pro-97–Lys-120, Leu-121–Glu-144, Leu-145–Leu-169, Pro-170–Lys-192, Ala-194–Pro-220, Asn-221–Ala-240, Asn-241–Phe-263, Pro-264–Leu-288, and Leu-290–Ser-312. Asn-109, Asn-133, Asn-147, and Asn-157 each carry an N-linked (GlcNAc...) asparagine glycan. An N-linked (GlcNAc...) asparagine glycan is attached at Asn-241. N-linked (GlcNAc...) asparagine glycosylation is present at Asn-294. Intrachain disulfides connect Cys-301–Cys-323 and Cys-325–Cys-332.

Belongs to the polygalacturonase-inhibiting protein family.

The protein resides in the secreted. It localises to the cell wall. It is found in the membrane. Inhibitor of fungal polygalacturonase. It is an important factor for plant resistance to phytopathogenic fungi. In Vitis vinifera (Grape), this protein is Polygalacturonase inhibitor (pgip).